We begin with the raw amino-acid sequence, 309 residues long: Glutaminase (309 aa).

The substrate site is built by Ser-64, Asn-114, Glu-160, Asn-167, Tyr-191, Tyr-243, and Val-261.

This sequence belongs to the glutaminase family. As to quaternary structure, homotetramer.

The catalysed reaction is L-glutamine + H2O = L-glutamate + NH4(+). This is Glutaminase from Rhodopseudomonas palustris (strain BisB18).